The following is a 104-amino-acid chain: UPF0145 protein STH1265 (104 aa).

This sequence belongs to the UPF0145 family.

The chain is UPF0145 protein STH1265 from Symbiobacterium thermophilum (strain DSM 24528 / JCM 14929 / IAM 14863 / T).